The primary structure comprises 430 residues: MSTIRSIHAREILDSRGNPTLEAEVTLEDGSFGRAAVPSGASTGTKEAVELRDGDKTRYLGKGVRKAVDNVNTTIANALKGVEASDQEGLDRRLIDLDGTENKGRLGANALLGVSMAAAHAAAASSKQALWQYLAAKTGVTPSLPVPMMNIINGGAHADNNVDFQEFMVLPVGFTSFSEALRAGTEIFHSLKSVLKGHGLSTAVGDEGGFAPDFRSNVEALDTILEAIGKAGYTAGEDVLLGLDVASSEFFENGKYNLVGENKRLTSEQFVDFLADWAAQYPIITIEDGLAENDWAGWKLLTDRIGKKVQLVGDDLFVTNPKIFQEGIDSGTANAILIKVNQIGTLSETLEAIAMADRAGYAAVVSHRSGETEDTTIADISVATTATQIKTGSLCRSDRVAKYNQLLRIEEALGAGARYAGRDAFVSLKR.

Position 165 (glutamine 165) interacts with (2R)-2-phosphoglycerate. The active-site Proton donor is the glutamate 207. Mg(2+)-binding residues include aspartate 244, glutamate 287, and aspartate 314. (2R)-2-phosphoglycerate is bound by residues lysine 339, arginine 368, serine 369, and lysine 390. Residue lysine 339 is the Proton acceptor of the active site.

This sequence belongs to the enolase family. In terms of assembly, component of the RNA degradosome, a multiprotein complex involved in RNA processing and mRNA degradation. Requires Mg(2+) as cofactor.

Its subcellular location is the cytoplasm. It is found in the secreted. The protein localises to the cell surface. It catalyses the reaction (2R)-2-phosphoglycerate = phosphoenolpyruvate + H2O. It participates in carbohydrate degradation; glycolysis; pyruvate from D-glyceraldehyde 3-phosphate: step 4/5. Its function is as follows. Catalyzes the reversible conversion of 2-phosphoglycerate (2-PG) into phosphoenolpyruvate (PEP). It is essential for the degradation of carbohydrates via glycolysis. The polypeptide is Enolase (Stenotrophomonas maltophilia (strain R551-3)).